The following is a 448-amino-acid chain: Adenylosuccinate synthetase (448 aa).

GTP-binding positions include 36–42 (GDEGKGK) and 64–66 (GHT). D37 (proton acceptor) is an active-site residue. Residues D37 and G64 each coordinate Mg(2+). IMP is bound by residues 37–40 (DEGK), 62–65 (NAGH), T154, R168, N246, T261, and R325. H65 serves as the catalytic Proton donor. Residue 321–327 (VTTKRKR) participates in substrate binding. Residues R327, 353 to 355 (KLD), and 436 to 438 (GVG) each bind GTP.

Belongs to the adenylosuccinate synthetase family. As to quaternary structure, homodimer. Mg(2+) is required as a cofactor.

Its subcellular location is the cytoplasm. The enzyme catalyses IMP + L-aspartate + GTP = N(6)-(1,2-dicarboxyethyl)-AMP + GDP + phosphate + 2 H(+). Its pathway is purine metabolism; AMP biosynthesis via de novo pathway; AMP from IMP: step 1/2. Plays an important role in the de novo pathway and in the salvage pathway of purine nucleotide biosynthesis. Catalyzes the first committed step in the biosynthesis of AMP from IMP. The sequence is that of Adenylosuccinate synthetase from Drosophila pseudoobscura pseudoobscura (Fruit fly).